The primary structure comprises 131 residues: C-type natriuretic peptide 2 (131 aa).

The signal sequence occupies residues 1 to 22 (MLYPALLCAALLLIAPLGHTEG). Residues 23–109 (RTLYPSPDAI…KRAVTDRSRR (87 aa)) constitute a propeptide that is removed on maturation. A disulfide bond links cysteine 115 and cysteine 131.

This sequence belongs to the natriuretic peptide family. Expressed in brain and to a low extent in atrium.

Its subcellular location is the secreted. Exhibits natriuretic and vasodepressor activity. Has a cGMP-stimulating activity. This chain is C-type natriuretic peptide 2, found in Oncorhynchus mykiss (Rainbow trout).